A 372-amino-acid polypeptide reads, in one-letter code: Queuine tRNA-ribosyltransferase (372 aa).

Catalysis depends on Asp-89, which acts as the Proton acceptor. Residues 89-93 (DSGGF), Asp-161, and Gly-232 each bind substrate. The RNA binding stretch occupies residues 262–268 (GIGDLPS). Asp-281 (nucleophile) is an active-site residue. An RNA binding; important for wobble base 34 recognition region spans residues 286 to 290 (TKAAR). The Zn(2+) site is built by Cys-319, Cys-321, Cys-324, and His-351.

The protein belongs to the queuine tRNA-ribosyltransferase family. Homodimer. Within each dimer, one monomer is responsible for RNA recognition and catalysis, while the other monomer binds to the replacement base PreQ1. Requires Zn(2+) as cofactor.

It carries out the reaction 7-aminomethyl-7-carbaguanine + guanosine(34) in tRNA = 7-aminomethyl-7-carbaguanosine(34) in tRNA + guanine. It participates in tRNA modification; tRNA-queuosine biosynthesis. Its function is as follows. Catalyzes the base-exchange of a guanine (G) residue with the queuine precursor 7-aminomethyl-7-deazaguanine (PreQ1) at position 34 (anticodon wobble position) in tRNAs with GU(N) anticodons (tRNA-Asp, -Asn, -His and -Tyr). Catalysis occurs through a double-displacement mechanism. The nucleophile active site attacks the C1' of nucleotide 34 to detach the guanine base from the RNA, forming a covalent enzyme-RNA intermediate. The proton acceptor active site deprotonates the incoming PreQ1, allowing a nucleophilic attack on the C1' of the ribose to form the product. After dissociation, two additional enzymatic reactions on the tRNA convert PreQ1 to queuine (Q), resulting in the hypermodified nucleoside queuosine (7-(((4,5-cis-dihydroxy-2-cyclopenten-1-yl)amino)methyl)-7-deazaguanosine). This is Queuine tRNA-ribosyltransferase from Chlamydia muridarum (strain MoPn / Nigg).